Here is a 1160-residue protein sequence, read N- to C-terminus: Major DNA-binding protein (1160 aa).

The short motif at 808 to 809 is the Required for filament formation element; it reads FW. Positions 1139 to 1160 are required for nuclear localization; sequence ARGGEHAFDEDCGLLPAKRGRL.

It belongs to the herpesviridae major DNA-binding protein family. In terms of assembly, homooligomers. Forms double-helical filaments necessary for the formation of replication compartments within the host nucleus. Interacts with the origin-binding protein. Interacts with the helicase primase complex; this interaction stimulates primer synthesis activity of the helicase-primase complex. Interacts with the DNA polymerase. Interacts with the alkaline exonuclease; this interaction increases its nuclease processivity.

The protein resides in the host nucleus. Its function is as follows. Single-stranded DNA-binding protein required for DNA replication. In terms of biological role, plays several crucial roles in viral infection. Participates in the opening of the viral DNA origin to initiate replication by interacting with the origin-binding protein. May disrupt loops, hairpins and other secondary structures present on ssDNA to reduce and eliminate pausing of viral DNA polymerase at specific sites during elongation. Promotes viral DNA recombination by performing strand-transfer, characterized by the ability to transfer a DNA strand from a linear duplex to a complementary single-stranded DNA circle. Can also catalyze the renaturation of complementary single strands. Additionally, reorganizes the host cell nucleus, leading to the formation of prereplicative sites and replication compartments. This process is driven by the protein which can form double-helical filaments in the absence of DNA. The polypeptide is Major DNA-binding protein (Simian cytomegalovirus (strain Colburn)).